We begin with the raw amino-acid sequence, 66 residues long: uncharacterized protein (66 aa).

The chain crosses the membrane as a helical span at residues proline 11–leucine 31.

The protein resides in the membrane. This is an uncharacterized protein from Chenopodium amaranticolor (Quinoa).